Reading from the N-terminus, the 349-residue chain is Homeobox protein engrailed (349 aa).

Disordered stretches follow at residues 26 to 53 (DGPSPLSASTPGPSPDRPGSATMSSPLS), 146 to 210 (GKET…PLPP), 228 to 252 (PSSGRSPRCRRMKKDKAITPDEKRP), and 327 to 349 (STIPTEDDEDDEISSTSLQARIE). 2 stretches are compositionally biased toward basic and acidic residues: residues 173–188 (QMKKKEEIKEEARTES) and 242–252 (DKAITPDEKRP). The homeobox DNA-binding region spans 249–308 (EKRPRTAFTAEQLSRLKHEFNENRYLTERRRQDLARELGLHENQIKIWFQNNRAKLKKSS).

This sequence belongs to the engrailed homeobox family.

It localises to the nucleus. The polypeptide is Homeobox protein engrailed (Artemia franciscana (Brine shrimp)).